The sequence spans 87 residues: U3-theraphotoxin-Hhn1a 17 (87 aa).

The signal sequence occupies residues 1 to 24; that stretch reads MVNVKASMFLTFAGLVLLFVVCYA. A propeptide spanning residues 25–52 is cleaved from the precursor; sequence SESEEKEFPKEMLSSIFAVDNDFKQEER. Disulfide bonds link Cys-54-Cys-67, Cys-61-Cys-72, and Cys-66-Cys-79.

Belongs to the neurotoxin 10 (Hwtx-1) family. 51 (Hntx-8) subfamily. Hntx-8 sub-subfamily. As to expression, expressed by the venom gland.

Its subcellular location is the secreted. Its function is as follows. Ion channel inhibitor. In Cyriopagopus hainanus (Chinese bird spider), this protein is U3-theraphotoxin-Hhn1a 17.